A 217-amino-acid chain; its full sequence is LSM12 homolog A (217 aa).

The 70-residue stretch at 9 to 78 (VNAVNDCFSI…CSNVQVIKEC (70 aa)) folds into the Sm domain. The AD domain maps to 86-184 (QKLNLEQVKM…IIKQFFNTRP (99 aa)). Residues 185–217 (SPVPESGAAASTSSPSVSPTSSSLASGSPVPAN) form a disordered region. Low complexity predominate over residues 190-217 (SGAAASTSSPSVSPTSSSLASGSPVPAN).

The protein belongs to the LSM12 family. In terms of assembly, component of the Atx2-tyf activator complex, composed of Atx2, tyf, pAbp, Lsm12a. Interacts with tyf, Atx2 and pAbp.

In terms of biological role, component of the Atx2-tyf activator complex which functions in the circadian pacemaker neurons to activate the TYF-dependent translation of per and maintain 24 hour periodicity in circadian behaviors. Within the Atx2-tyf complex, likely to function as a molecular adapter which stabilizes the interaction between Atx2 and the translational regulator tyf. This chain is LSM12 homolog A, found in Drosophila melanogaster (Fruit fly).